Consider the following 432-residue polypeptide: Putative D-alanyl-D-alanine carboxypeptidase (432 aa).

The chain crosses the membrane as a helical; Signal-anchor span at residues 7 to 25; the sequence is ATVLLTFSLSAFAVEYPVL.

Belongs to the peptidase S12 family. YfeW subfamily.

Its subcellular location is the cell inner membrane. The catalysed reaction is Preferential cleavage: (Ac)2-L-Lys-D-Ala-|-D-Ala. Also transpeptidation of peptidyl-alanyl moieties that are N-acyl substituents of D-alanine.. The sequence is that of Putative D-alanyl-D-alanine carboxypeptidase from Salmonella enteritidis PT4 (strain P125109).